Reading from the N-terminus, the 949-residue chain is AP-1 complex subunit beta-1 (949 aa).

Lys-318 is subject to N6-acetyllysine. A 3'-nitrotyrosine modification is found at Tyr-574. The disordered stretch occupies residues 584-625 (GGRGVVHKSLPPRTASSESAESPETAPTGAPPGEQPDVIPAQ). A compositionally biased stretch (low complexity) spans 594–611 (PPRTASSESAESPETAPT).

The protein belongs to the adaptor complexes large subunit family. As to quaternary structure, adaptor protein complex 1 (AP-1) is a heterotetramer composed of two large adaptins (gamma-type subunit AP1G1 and beta-type subunit AP1B1), a medium adaptin (mu-type subunit AP1M1 or AP1M2) and a small adaptin (sigma-type subunit AP1S1 or AP1S2 or AP1S3). Widely expressed.

It localises to the golgi apparatus. Its subcellular location is the cytoplasmic vesicle. The protein resides in the clathrin-coated vesicle membrane. Subunit of clathrin-associated adaptor protein complex 1 that plays a role in protein sorting in the late-Golgi/trans-Golgi network (TGN) and/or endosomes. The AP complexes mediate both the recruitment of clathrin to membranes and the recognition of sorting signals within the cytosolic tails of transmembrane cargo molecules. The chain is AP-1 complex subunit beta-1 (AP1B1) from Homo sapiens (Human).